The chain runs to 322 residues: DNA repair and recombination protein RadA (322 aa).

105 to 112 (GMYGSGKT) is a binding site for ATP.

It belongs to the eukaryotic RecA-like protein family.

In terms of biological role, involved in DNA repair and in homologous recombination. Binds and assemble on single-stranded DNA to form a nucleoprotein filament. Hydrolyzes ATP in a ssDNA-dependent manner and promotes DNA strand exchange between homologous DNA molecules. The polypeptide is DNA repair and recombination protein RadA (Methanococcus maripaludis (strain C5 / ATCC BAA-1333)).